The following is a 177-amino-acid chain: LOB domain-containing protein 33 (177 aa).

The LOB domain maps to 6–108 (SSCGACKFLR…EEIEFLGSQM (103 aa)).

It belongs to the LOB domain-containing protein family. Expressed in roots.

This chain is LOB domain-containing protein 33 (LBD33), found in Arabidopsis thaliana (Mouse-ear cress).